Here is a 128-residue protein sequence, read N- to C-terminus: Large ribosomal subunit protein eL22 (128 aa).

It belongs to the eukaryotic ribosomal protein eL22 family. As to quaternary structure, component of the large ribosomal subunit.

Its subcellular location is the cytoplasm. Functionally, component of the large ribosomal subunit. The ribosome is a large ribonucleoprotein complex responsible for the synthesis of proteins in the cell. This Ictalurus punctatus (Channel catfish) protein is Large ribosomal subunit protein eL22 (rpl22).